The chain runs to 151 residues: D-aminoacyl-tRNA deacylase (151 aa).

The Gly-cisPro motif, important for rejection of L-amino acids motif lies at 136-137; that stretch reads GP.

This sequence belongs to the DTD family. In terms of assembly, homodimer.

Its subcellular location is the cytoplasm. It carries out the reaction glycyl-tRNA(Ala) + H2O = tRNA(Ala) + glycine + H(+). It catalyses the reaction a D-aminoacyl-tRNA + H2O = a tRNA + a D-alpha-amino acid + H(+). In terms of biological role, an aminoacyl-tRNA editing enzyme that deacylates mischarged D-aminoacyl-tRNAs. Also deacylates mischarged glycyl-tRNA(Ala), protecting cells against glycine mischarging by AlaRS. Acts via tRNA-based rather than protein-based catalysis; rejects L-amino acids rather than detecting D-amino acids in the active site. By recycling D-aminoacyl-tRNA to D-amino acids and free tRNA molecules, this enzyme counteracts the toxicity associated with the formation of D-aminoacyl-tRNA entities in vivo and helps enforce protein L-homochirality. The chain is D-aminoacyl-tRNA deacylase from Lactococcus lactis subsp. lactis (strain IL1403) (Streptococcus lactis).